A 524-amino-acid polypeptide reads, in one-letter code: uncharacterized protein (524 aa).

The segment covering 83-101 (NSTPSKQAKPLQRNSPYQG) has biased composition (polar residues). Disordered stretches follow at residues 83-108 (NSTP…SENQ) and 155-179 (PPCN…KRPR).

Its subcellular location is the cytoplasm. This is an uncharacterized protein from Saccharomyces cerevisiae (strain ATCC 204508 / S288c) (Baker's yeast).